A 557-amino-acid chain; its full sequence is Glypican-4 (557 aa).

The first 18 residues, 1 to 18 (MARLGLLALLCTLAALSA), serve as a signal peptide directing secretion. Ser357 carries the post-translational modification Phosphoserine. 3 O-linked (Xyl...) (glycosaminoglycan) serine glycosylation sites follow: Ser494, Ser498, and Ser500. N-linked (GlcNAc...) asparagine glycosylation is present at Asn514. Residue Ser529 is the site of GPI-anchor amidated serine attachment. Residues 530-557 (AGGAHAEAKPYLLAALCILFLAVQGEWR) constitute a propeptide, removed in mature form.

This sequence belongs to the glypican family. As to expression, highly expressed in developing brain and kidney.

It is found in the cell membrane. The protein localises to the secreted. The protein resides in the extracellular space. Functionally, cell surface proteoglycan that bears heparan sulfate. May be involved in the development of kidney tubules and of the central nervous system. The chain is Glypican-4 (Gpc4) from Mus musculus (Mouse).